Reading from the N-terminus, the 86-residue chain is UPF0125 protein bbp_234 (86 aa).

The protein belongs to the UPF0125 (RnfH) family.

This Buchnera aphidicola subsp. Baizongia pistaciae (strain Bp) protein is UPF0125 protein bbp_234.